Here is a 375-residue protein sequence, read N- to C-terminus: EP300-interacting inhibitor of differentiation 3 (375 aa).

Positions 23-51 form a coiled coil; it reads AWQHLVKQEEEEAVKKEEKEEGEDEEEEG. Residues 30–68 form a disordered region; the sequence is QEEEEAVKKEEKEEGEDEEEEGSDSSSDDPNPEPPCMHP. Residues 42–60 are compositionally biased toward acidic residues; the sequence is EEGEDEEEEGSDSSSDDPN.

This sequence belongs to the NSE4 family. Component of the SMC5-SMC6 complex which consists at least of SMC5, SMC6, NSMCE2, NSMCE1, NSMCE4A or EID3 and NSMCE3; EID3 seems to be a testis-specific subunit. NSMCE1, NSMCE4A or EID3 and NSMCE3 probably form a subcomplex that bridges the head domains of the SMC5:SMC6 heterodimer. Homodimer, and heterodimer with EID2. Interacts with the C-terminal region of CREBBP.

The protein resides in the nucleus. It is found in the cytoplasm. Its subcellular location is the chromosome. It localises to the telomere. Functionally, tissue-specific component of the SMC5-SMC6 complex, a complex involved in repair of DNA double-strand breaks by homologous recombination. The complex may promote sister chromatid homologous recombination by recruiting the SMC1-SMC3 cohesin complex to double-strand breaks. The complex is required for telomere maintenance via recombination and mediates sumoylation of shelterin complex (telosome) components. Acts as a repressor of nuclear receptor-dependent transcription possibly by interfering with CREBBP-dependent coactivation. May function as a coinhibitor of other CREBBP/EP300-dependent transcription factors. The sequence is that of EP300-interacting inhibitor of differentiation 3 from Mus musculus (Mouse).